A 263-amino-acid chain; its full sequence is Phosphatidylglycerol--prolipoprotein diacylglyceryl transferase (263 aa).

4 helical membrane-spanning segments follow: residues 7 to 27, 50 to 70, 85 to 105, and 112 to 132; these read IFSIGPVSIHWYSLAYVLGIV, LLTATIIGIILGGRLGFVLIY, TWKGGMSFHGGAIGVLCAVII, and IPIFYTLDLISCGVPIGLFLG. R133 is an a 1,2-diacyl-sn-glycero-3-phospho-(1'-sn-glycerol) binding site. 3 helical membrane passes run 169 to 189, 197 to 217, and 233 to 253; these read LYEAFFEGLLFFAIANSLFFL, GTLTGIAVIWYGTVRFVVEFF, and MGQLLSIFMTLLGIIVYLSAL.

Belongs to the Lgt family.

Its subcellular location is the cell membrane. It carries out the reaction L-cysteinyl-[prolipoprotein] + a 1,2-diacyl-sn-glycero-3-phospho-(1'-sn-glycerol) = an S-1,2-diacyl-sn-glyceryl-L-cysteinyl-[prolipoprotein] + sn-glycerol 1-phosphate + H(+). The protein operates within protein modification; lipoprotein biosynthesis (diacylglyceryl transfer). Functionally, catalyzes the transfer of the diacylglyceryl group from phosphatidylglycerol to the sulfhydryl group of the N-terminal cysteine of a prolipoprotein, the first step in the formation of mature lipoproteins. The chain is Phosphatidylglycerol--prolipoprotein diacylglyceryl transferase from Wolbachia sp. subsp. Brugia malayi (strain TRS).